The chain runs to 161 residues: Endoribonuclease YbeY (161 aa).

Residues His127, His131, and His137 each coordinate Zn(2+).

It belongs to the endoribonuclease YbeY family. Zn(2+) serves as cofactor.

The protein localises to the cytoplasm. Single strand-specific metallo-endoribonuclease involved in late-stage 70S ribosome quality control and in maturation of the 3' terminus of the 16S rRNA. The polypeptide is Endoribonuclease YbeY (Listeria monocytogenes serotype 4a (strain HCC23)).